The sequence spans 350 residues: Anthranilate phosphoribosyltransferase (350 aa).

5-phospho-alpha-D-ribose 1-diphosphate is bound by residues glycine 94, 97–98, threonine 102, 104–107, 122–130, and serine 134; these read GD, NIST, and KHGNRSVSS. Glycine 94 contacts anthranilate. Serine 106 provides a ligand contact to Mg(2+). Asparagine 125 lines the anthranilate pocket. Arginine 180 is a binding site for anthranilate. Residues aspartate 239 and glutamate 240 each coordinate Mg(2+).

This sequence belongs to the anthranilate phosphoribosyltransferase family. As to quaternary structure, homodimer. Mg(2+) is required as a cofactor.

It catalyses the reaction N-(5-phospho-beta-D-ribosyl)anthranilate + diphosphate = 5-phospho-alpha-D-ribose 1-diphosphate + anthranilate. It functions in the pathway amino-acid biosynthesis; L-tryptophan biosynthesis; L-tryptophan from chorismate: step 2/5. Catalyzes the transfer of the phosphoribosyl group of 5-phosphorylribose-1-pyrophosphate (PRPP) to anthranilate to yield N-(5'-phosphoribosyl)-anthranilate (PRA). This Geotalea daltonii (strain DSM 22248 / JCM 15807 / FRC-32) (Geobacter daltonii) protein is Anthranilate phosphoribosyltransferase.